The chain runs to 77 residues: Blood-induced peptide 1 (77 aa).

Positions 38-71 (EDFLHQENSELKKSLKNLEMENEKLKNILKTDYN) form a coiled coil.

In terms of biological role, plays an important role in survival in host blood through increasing tolerance to stresses such as heat, salt, or cycloheximide, which is essential for virulence. The protein is Blood-induced peptide 1 of Candida albicans (strain SC5314 / ATCC MYA-2876) (Yeast).